Here is a 384-residue protein sequence, read N- to C-terminus: MSFSNSKDKSVVAVYKLVKAPIYSHCFSQDKSILAVTCETDCLVYRVSNNTPPVLFATLKDHDKTITAVDISIHGRIVTCSQDRNAYVWEPLSDGTYKPTLVLLRINRAATSVTWAPNGYKFAVGSSARIIAVCYYEHENNWWVSKHIKKPIKSTINCLSWHANGVLLAAGGTDGFMRVFSGFIKGLDSKESVAGSPWGQKFPFGCLIREWYQGSYIHDVEWRSQMERIAYVAHDGTLNVVDYQSPVQSVNAPEGLPYRSLVWINDHEIVCGGYSCHPVLFSEASEGWKFAKNLDKSDNNKSSALTASGNTDELSGNNDESSTFGISALRKFKELDLKGKVSTDVQESAHENAIVELRPFAESNGQITQVSSCGLDGKIVIYTI.

5 WD repeats span residues aspartate 61–proline 99, arginine 105–lysine 146, proline 151–lysine 190, tyrosine 212–asparagine 251, and alanine 349–threonine 383.

The protein belongs to the WD repeat ARPC1 family. Component of the Arp2/3 complex composed of ARP2, ARP3, ARC40/p41-ARC, ARC35/p34-ARC, ARC18/p21-ARC, ARC19/p20-ARC and ARC16/p16-ARC.

The protein localises to the cytoplasm. It is found in the cytoskeleton. It localises to the actin patch. Functionally, functions as a component of the Arp2/3 complex which is involved in regulation of actin polymerization and together with an activating nucleation-promoting factor (NPF) mediates the formation of branched actin networks. In Saccharomyces cerevisiae (strain ATCC 204508 / S288c) (Baker's yeast), this protein is Actin-related protein 2/3 complex subunit 1 (ARC40).